The sequence spans 57 residues: uncharacterized protein (57 aa).

Its subcellular location is the plastid. This is an uncharacterized protein from Euglena longa (Euglenophycean alga).